The sequence spans 255 residues: 5-oxoprolinase subunit A (255 aa).

The protein belongs to the LamB/PxpA family. As to quaternary structure, forms a complex composed of PxpA, PxpB and PxpC.

The catalysed reaction is 5-oxo-L-proline + ATP + 2 H2O = L-glutamate + ADP + phosphate + H(+). In terms of biological role, catalyzes the cleavage of 5-oxoproline to form L-glutamate coupled to the hydrolysis of ATP to ADP and inorganic phosphate. This is 5-oxoprolinase subunit A from Rhodopseudomonas palustris (strain BisB18).